The sequence spans 223 residues: Deoxyribose-phosphate aldolase (223 aa).

Asp-91 serves as the catalytic Proton donor/acceptor. The Schiff-base intermediate with acetaldehyde role is filled by Lys-154. Catalysis depends on Lys-183, which acts as the Proton donor/acceptor.

Belongs to the DeoC/FbaB aldolase family. DeoC type 1 subfamily.

Its subcellular location is the cytoplasm. The enzyme catalyses 2-deoxy-D-ribose 5-phosphate = D-glyceraldehyde 3-phosphate + acetaldehyde. It participates in carbohydrate degradation; 2-deoxy-D-ribose 1-phosphate degradation; D-glyceraldehyde 3-phosphate and acetaldehyde from 2-deoxy-alpha-D-ribose 1-phosphate: step 2/2. Catalyzes a reversible aldol reaction between acetaldehyde and D-glyceraldehyde 3-phosphate to generate 2-deoxy-D-ribose 5-phosphate. This chain is Deoxyribose-phosphate aldolase, found in Geobacillus kaustophilus (strain HTA426).